The primary structure comprises 291 residues: Verruculogen synthase (291 aa).

The active site involves Y68.

Belongs to the PhyH family. Homodimer. The cofactor is Fe cation.

It carries out the reaction fumitremorgin B + 2-oxoglutarate + AH2 + 2 O2 = verruculogen + succinate + A + CO2 + H2O. Its pathway is mycotoxin biosynthesis. Verruculogen synthase; part of the gene cluster that mediates the biosynthesis of fumitremorgins, indole alkaloids that carry not only intriguing chemical structures, but also interesting biological and pharmacological activities. The biosynthesis of fumitremorgin-type alkaloids begins by condensation of the two amino acids L-tryptophan and L-proline to brevianamide F, catalyzed by the non-ribosomal peptide synthetase ftmA. Brevianamide F is then prenylated by the prenyltransferase ftmPT1/ftmB in the presence of dimethylallyl diphosphate, resulting in the formation of tryprostatin B. The three cytochrome P450 monooxygenases, ftmP450-1/ftmC, ftmP450-2/ftmE and ftmP450-3/FtmG, are responsible for the conversion of tryprostatin B to 6-hydroxytryprostatin B, tryprostatin A to fumitremorgin C and fumitremorgin C to 12,13-dihydroxyfumitremorgin C, respectively. The putative methyltransferase ftmMT/ftmD is expected for the conversion of 6-hydroxytryprostatin B to tryprostatin A. FtmPT2/FtmH catalyzes the prenylation of 12,13-dihydroxyfumitre-morgin C in the presence of dimethylallyl diphosphate, resulting in the formation of fumitremorgin B. Fumitremorgin B is further converted to verruculogen by ftmOx1/ftmF via the insertion of an endoperoxide bond between the two prenyl moieties. In some fungal species, verruculogen is further converted to fumitremorgin A, but the enzymes involved in this step have not been identified yet. The chain is Verruculogen synthase from Aspergillus fumigatus (Neosartorya fumigata).